The sequence spans 440 residues: Histidinol dehydrogenase (440 aa).

3 residues coordinate NAD(+): tyrosine 136, glutamine 197, and asparagine 220. Substrate contacts are provided by serine 243, glutamine 265, and histidine 268. Positions 265 and 268 each coordinate Zn(2+). Residues glutamate 333 and histidine 334 each act as proton acceptor in the active site. The substrate site is built by histidine 334, aspartate 367, glutamate 421, and histidine 426. Zn(2+) is bound at residue aspartate 367. Position 426 (histidine 426) interacts with Zn(2+).

It belongs to the histidinol dehydrogenase family. The cofactor is Zn(2+).

It catalyses the reaction L-histidinol + 2 NAD(+) + H2O = L-histidine + 2 NADH + 3 H(+). Its pathway is amino-acid biosynthesis; L-histidine biosynthesis; L-histidine from 5-phospho-alpha-D-ribose 1-diphosphate: step 9/9. Functionally, catalyzes the sequential NAD-dependent oxidations of L-histidinol to L-histidinaldehyde and then to L-histidine. The protein is Histidinol dehydrogenase of Pseudomonas aeruginosa (strain ATCC 15692 / DSM 22644 / CIP 104116 / JCM 14847 / LMG 12228 / 1C / PRS 101 / PAO1).